A 360-amino-acid chain; its full sequence is Peptide chain release factor 1 (360 aa).

At Gln235 the chain carries N5-methylglutamine. A compositionally biased stretch (basic and acidic residues) spans 284 to 293 (QKRQQEEAST). The disordered stretch occupies residues 284 to 305 (QKRQQEEASTRRNLLGSGDRSD).

Belongs to the prokaryotic/mitochondrial release factor family. In terms of processing, methylated by PrmC. Methylation increases the termination efficiency of RF1.

Its subcellular location is the cytoplasm. Its function is as follows. Peptide chain release factor 1 directs the termination of translation in response to the peptide chain termination codons UAG and UAA. The protein is Peptide chain release factor 1 of Pectobacterium carotovorum subsp. carotovorum (strain PC1).